A 3432-amino-acid polypeptide reads, in one-letter code: MTKKPGGPGKNRAINMLKRGLPRVFPLVGVKRVVMSLLDGRGPVRFVLALITFFKFTALAPTKALLGRWRAVEKSVAMKHLTSFKRELGTLIDAVNKRGKKQNKRGGNESSIMWLASLAIVIACAGAMKLSNFQGKLLMTINNTDIADVIVIPTSKGENRCWVRAIDVGYMCEDTITYECPKLAVGNDPEDVDCWCDNQEVYVQYGRCTRTRHSKRSRRSVSVQTHGESSLVNKKEAWLDSTKATRYLMKTENWIIRNPGYAFLAAALGWMLGSNSGQRVVFTILLLLVAPAYSFNCLGMGNRDFIEGASGATWVDLVLEGDSCLTIMANDKPTLDVRMINIEASQLAEVRSYCYHASVTDISTVARCPTTGEAHNEKRADSSYVCKQGFTDRGWGNGCGLFGKGSIDTCAKFSCTSKAIGRTIQPENIKYEVGVFVHGTTTSENHGNYSAQVGASQAAKFTVTPNAPSITLKLGDYGEVTLDCEPRSGLNTEAFYVMTVGSKSFLVHREWFHDLSLPWTSPSSTAWRNRELLMEFEEAHATKQSVVALGSQEGGLHQALAGAIVVEYSSSVKLTSGHLKCRLKMDKLALKGTTYGMCTEKFSFAKNPADTGHGTVVIELTYSGSDGPCKIPIVSVASLNDMTPVGRLVTVNPFVATSSSNSKVLVEMEPPFGDSYIVVGRGDKQINHHWYKAGSTLGKAFSTTLKGAQRLAALGDTAWDFGSIGGVFNSIGKAVHQVFGGAFRTLFGGMSWITQGLMGALLLWMGVNARDRSIALAFLATGGVLVFLATNVHADTGCAIDITRKEMRCGSGIFVHNDVEAWVDRYKYLPETPRSLAKIVHKAHQEGVCGVRSVTRLEHQMWESVRDELNVLLKENAVDLSVVVNKPVGRYRSAPKRLSMTQEKFEMGWKAWGKSILFAPELANSTFVVDGPETKECPDERRAWNSMQIEDFGFGITSTRVWLKIREENTDECDGAIIGTAVKGHVAVHSDLSYWIESRLNDTWKLERAVFGEVKSCTWPETHTLWGDGVEESELIIPHTIAGPRSKHNRREGYKTQNQGPWDENGIVLDFDYCPGTKVTITEDCGKRGPSIRTTTDSGKLITDWCCRSCSLPPLRFRTENGCWYGMEIRPVRHDETTLVRSQVDAFNGEMIDPFQLGLLVMFLATQEVLRKRWTARLTIPAVLGALLVLMLGGITYIDLARYVVLVAAAFAEANSGGDVLHLALIAVFKIQPAFLVMNMLSARWTNQENMVLVLGAAFFQLASVDLQIGVHGILNAAAIAWMIVRAITFPTTSTVAMPVLALLTPGMRALYLDTYRIILLVIGICSLLQERRKTMAKKKGAVLLGLALTSTGWFSPTTIAAGLMVCNPNKKRGWPATEFLSAVGLMFAIVGGLAELDIESMSIPFMLAGLMAVSYVISGKATDMWLDRAADISWEMEAAITGSSRRLDVKLDDDGDFHLIDDPGVPWKVWLLRMSCIGLAALTPWAIVPAAFGYWLTLKTTKRGGVFWDTPSPKPCLKGDTTTGVYRIMARGILGTYQAGVGVMYENVFHTLWHTTRGAAIMSGEGKLTPYWGSVKEDRISYGGPWRFDRKWNGTDDVQVIVVEPGKPAVNIQTKPGVFRTPFGEIGAVSLDYPRGTSGSPILDSNGDIIGLYGNGVELGDGSYVSAIVQGDRQEEPVPDAYTPSMLKKRQMTVLDLHPGSGKTRKILPQIIKDAIQQRLRTAVLAPTRVVAAEMAEALRGLPVRYQTSAVQREHQGNEIVDVMCHATLTHRLMSPNRVPNYNLFVMDEAHFTDPASIAARGYIATKVELGEAAAIFMTATPPGTTDPFPDSNAPIHDLQDEIPDRAWSSGYEWITEYAGKTVWFVASVKMGNEIAMCLQRAGKKVIQLNRKSYDTEYPKCKNGDWDFVITTDISEMGANFGASRVIDCRKSVKPTILEEGEGRVILGNPSPITSASAAQRRGRVGRNPNQVGDEYHYGGATSEDDSNLAHWTEAKIMLDNIHMPNGLVAQLYGPEREKAFTMDGEYRLRGEEKKNFLELLRTADLPVWLAYKVASNGIQYTDRKWCFDGPRTNAILEDNTEVEIVTRMGERKILKPRWLDARVYADHQALKWFKDFAAGKRSAVSFIEVLGRMPEHFMGKTREALDTMYLVATAEKGGKAHRMALEELPDALETITLIVAITVMTGGFFLLMMQRKGIGKMGLGALVLTLATFFLWAAEVPGTKIAGTLLVALLLMVVLIPEPEKQRSQTDNQLAVFLICVLTVVGVVAANEYGMLEKTKADLKSMFGGRTQAPGLTGLPSMALDLRPATAWALYGGSTVVLTPLLKHLITSEYVTTSLASISSQAGSLFVLPRGVPFTDLDLTVGLVFLGCWGQITLTTFLTAMVLVTLHYGYMLPGWQAEALRAAQRRTAAGIMKNAVVDGMVATDVPELERTTPLMQKKVGQVLLIGVSVAAFLVNPNVTTVREAGVLVTAATLTLWDNGASAVWNSTTATGLCHVMRGSYLAGGSIAWTLIKNADKPSLKRGRPGGRTLGEQWKEKLNAMSRDEFFKYRREAIIEVDRTEARRARRENNIVGGHPVSRGSAKLRWLVEKGFVSPIGKVIDLGCGRGGWSYYAATLKKVQEVKGYTKGGAGHEEPMLMQSYGWNLVSLKSGVDVFYKPSEPSDTLFCDIGESSPSPEVEEQRTLRVLEMTSDWLHRGPREFCIKVLCPYMPKVIEKMEVLQRRFGGGLVRLPLSRNSNHEMYWVSGAAGNVVHAVNMTSQVLLGRMDRTVWRGPKYEEDVNLGSGTRAVGKGEVHSNQEKIRKRIQKLREEFATTWHQDPEHPYRTWTYHGSYEVKATGSASSLVNGVVKLMSKPWDAIANVTTMAMTDTTPFGQQRVFKEKVDTKAPEPPAGVKEVLNETTNWLWAHLSREKRPRLCTKEEFIKKVNSNAALGAVFAEQNQWSTAREAVGDPLFWEMVDEERENHLRGECHTCIYNMMGKREKKPGEFGKAKGSRAIWFMWLGARYLEFEALGFLNEDHWLSRENSGGGVEGSGVQKLGYILRDIAGKQGGKMYADDTAGWDTRITRTDLENEAKVLELLDGEHRMLARAIIELTYRHKVVKVMRPAAGGKTVMDVISREDQRGSGQVVTYALNTFTNIAVQLVRLMEAEGVIGPQHLEQLPRKNKIAVRTWLFENGEERVTRMAISGDDCVVKPLDDRFATALHFLNAMSKVRKDIQEWKPSHGWHDWQQVPFCSNHFQEIVMKDGRSIVVPCRGQDELIGRARISPGAGWNVKDTACLAKAYAQMWLLLYFHRRDLRLMANAICSAVPVDWVPTGRTSWSIHSKGEWMTTEDMLQVWNRVWIEENEWMMDKTPITSWTDVPYVGKREDIWCGSLIGTRSRATWAENIYAAINQVRAVIGKENYVDYMSSLRRYEDVLIQEDRVI.

The tract at residues 2-15 (TKKPGGPGKNRAIN) is interaction with host EXOC1. At 2-109 (TKKPGGPGKN…KKQNKRGGNE (108 aa)) the chain is on the cytoplasmic side. Positions 37-72 (LLDGRGPVRFVLALITFFKFTALAPTKALLGRWRAV) are hydrophobic; homodimerization of capsid protein C. The propeptide at 106–127 (GGNESSIMWLASLAIVIACAGA) is ER anchor for the capsid protein C, removed in mature form by serine protease NS3. A helical membrane pass occupies residues 110 to 130 (SSIMWLASLAIVIACAGAMKL). Over 131–253 (SNFQGKLLMT…ATRYLMKTEN (123 aa)) the chain is Extracellular. Residue N142 is glycosylated (N-linked (GlcNAc...) asparagine; by host). A helical membrane pass occupies residues 254–274 (WIIRNPGYAFLAAALGWMLGS). The Cytoplasmic segment spans residues 275-279 (NSGQR). The chain crosses the membrane as a helical span at residues 280 to 294 (VVFTILLLLVAPAYS). At 295–746 (FNCLGMGNRD…QVFGGAFRTL (452 aa)) the chain is on the extracellular side. Intrachain disulfides connect C297–C324, C354–C410, C354–C415, C368–C399, C386–C410, and C386–C415. The tract at residues 392–405 (DRGWGNGCGLFGKG) is fusion peptide. A glycan (N-linked (GlcNAc...) asparagine; by host) is linked at N448. Cystine bridges form between C484–C581 and C598–C629. Residues 747-767 (FGGMSWITQGLMGALLLWMGV) form a helical membrane-spanning segment. At 768–773 (NARDRS) the chain is on the cytoplasmic side. A helical transmembrane segment spans residues 774–794 (IALAFLATGGVLVFLATNVHA). Residues 795–1219 (DTGCAIDITR…AFAEANSGGD (425 aa)) lie on the Extracellular side of the membrane. Disulfide bonds link C798–C809, C849–C937, C973–C1017, C1074–C1123, C1085–C1106, and C1107–C1110. N924 and N1001 each carry an N-linked (GlcNAc...) asparagine; by host glycan. A helical transmembrane segment spans residues 1220–1240 (VLHLALIAVFKIQPAFLVMNM). The Cytoplasmic portion of the chain corresponds to 1241-1250 (LSARWTNQEN). A helical transmembrane segment spans residues 1251 to 1271 (MVLVLGAAFFQLASVDLQIGV). Residue H1272 is a topological domain, lumenal. Residues 1273 to 1293 (GILNAAAIAWMIVRAITFPTT) form a helical membrane-spanning segment. Residues 1294-1309 (STVAMPVLALLTPGMR) are Cytoplasmic-facing. A helical membrane pass occupies residues 1310 to 1330 (ALYLDTYRIILLVIGICSLLQ). Residues 1331 to 1341 (ERRKTMAKKKG) are Lumenal-facing. A helical transmembrane segment spans residues 1342 to 1362 (AVLLGLALTSTGWFSPTTIAA). Topologically, residues 1363-1374 (GLMVCNPNKKRG) are cytoplasmic. A helical transmembrane segment spans residues 1375–1395 (WPATEFLSAVGLMFAIVGGLA). Over 1396-1398 (ELD) the chain is Lumenal. A helical transmembrane segment spans residues 1399-1419 (IESMSIPFMLAGLMAVSYVIS). At 1420 to 1476 (GKATDMWLDRAADISWEMEAAITGSSRRLDVKLDDDGDFHLIDDPGVPWKVWLLRMS) the chain is on the cytoplasmic side. The interacts with and activates NS3 protease stretch occupies residues 1427–1466 (LDRAADISWEMEAAITGSSRRLDVKLDDDGDFHLIDDPGV). Residues 1477-1497 (CIGLAALTPWAIVPAAFGYWL) constitute an intramembrane region (helical). The Cytoplasmic segment spans residues 1498–2173 (TLKTTKRGGV…RMALEELPDA (676 aa)). In terms of domain architecture, Peptidase S7 spans 1505–1682 (GGVFWDTPSP…DRQEEPVPDA (178 aa)). Active-site charge relay system; for serine protease NS3 activity residues include H1555, D1579, and S1639. A Helicase ATP-binding domain is found at 1685–1841 (PSMLKKRQMT…DSNAPIHDLQ (157 aa)). Residues 1689–1692 (KKRQ) are important for RNA-binding. 1698–1705 (LHPGSGKT) provides a ligand contact to ATP. The short motif at 1789 to 1792 (DEAH) is the DEAH box element. Residues 1852 to 2017 (GYEWITEYAG…GLVAQLYGPE (166 aa)) enclose the Helicase C-terminal domain. K1893 is modified (N6-acetyllysine; by host). Residues 1950–1969 (NPSPITSASAAQRRGRVGRN) are disordered. The segment at 2168–2172 (EELPD) is regulates the ATPase activity of NS3 helicase. Residues 2174-2194 (LETITLIVAITVMTGGFFLLM) form a helical membrane-spanning segment. Residues 2195–2199 (MQRKG) lie on the Lumenal side of the membrane. Residues 2200-2220 (IGKMGLGALVLTLATFFLWAA) constitute an intramembrane region (helical). A topological domain (lumenal) is located at residue E2221. The helical transmembrane segment at 2222 to 2242 (VPGTKIAGTLLVALLLMVVLI) threads the bilayer. Over 2243 to 2257 (PEPEKQRSQTDNQLA) the chain is Cytoplasmic. Residues 2258–2278 (VFLICVLTVVGVVAANEYGML) form a helical membrane-spanning segment. At 2279 to 2311 (EKTKADLKSMFGGRTQAPGLTGLPSMALDLRPA) the chain is on the lumenal side. The segment at residues 2312–2332 (TAWALYGGSTVVLTPLLKHLI) is an intramembrane region (helical). Residues 2333-2368 (TSEYVTTSLASISSQAGSLFVLPRGVPFTDLDLTVG) are Lumenal-facing. A helical transmembrane segment spans residues 2369–2389 (LVFLGCWGQITLTTFLTAMVL). At 2390–2444 (VTLHYGYMLPGWQAEALRAAQRRTAAGIMKNAVVDGMVATDVPELERTTPLMQKK) the chain is on the cytoplasmic side. Residues 2445–2465 (VGQVLLIGVSVAAFLVNPNVT) form a helical membrane-spanning segment. At 2466 to 2469 (TVRE) the chain is on the lumenal side. The chain crosses the membrane as a helical span at residues 2470-2490 (AGVLVTAATLTLWDNGASAVW). Topologically, residues 2491 to 3432 (NSTTATGLCH…DVLIQEDRVI (942 aa)) are cytoplasmic. An mRNA cap 0-1 NS5-type MT domain is found at 2528-2793 (GRPGGRTLGE…DVNLGSGTRA (266 aa)). S2583 serves as a coordination point for S-adenosyl-L-methionine. S2583 is modified (phosphoserine). K2588 serves as the catalytic For 2'-O-MTase activity. Positions 2613, 2614, 2631, 2632, 2658, and 2659 each coordinate S-adenosyl-L-methionine. The active-site For 2'-O-MTase activity is D2673. I2674 provides a ligand contact to S-adenosyl-L-methionine. Active-site for 2'-O-MTase activity residues include K2709 and E2745. Y2747 lines the S-adenosyl-L-methionine pocket. E2967, H2971, C2976, and C2979 together coordinate Zn(2+). The RdRp catalytic domain occupies 3057 to 3209 (GKMYADDTAG…KPLDDRFATA (153 aa)). The Zn(2+) site is built by H3244, C3260, and C3379.

It in the N-terminal section; belongs to the class I-like SAM-binding methyltransferase superfamily. mRNA cap 0-1 NS5-type methyltransferase family. In terms of assembly, homodimer. Interacts (via N-terminus) with host EXOC1 (via C-terminus); this interaction results in EXOC1 degradation through the proteasome degradation pathway. Forms heterodimers with envelope protein E in the endoplasmic reticulum and Golgi. As to quaternary structure, homodimer; in the endoplasmic reticulum and Golgi. Interacts with protein prM. Interacts with non-structural protein 1. Interacts with host HSPA5. In terms of assembly, homodimer; Homohexamer when secreted. Interacts with envelope protein E. NS1 interacts with NS4B. Interacts with host complement protein CFH; this interaction leads to the degradation of C3. Interacts (via N-terminus) with serine protease NS3. As to quaternary structure, forms a heterodimer with serine protease NS3. May form homooligomers. In terms of assembly, forms a heterodimer with NS2B. Interacts with non-structural protein 2A (via N-terminus). Interacts with NS4B. Interacts with unphosphorylated RNA-directed RNA polymerase NS5; this interaction stimulates RNA-directed RNA polymerase NS5 guanylyltransferase activity. Interacts with host ILF2. Interacts with serine protease NS3. As to quaternary structure, homodimer. Interacts with host STAT2; this interaction inhibits the phosphorylation of the latter, and, when all viral proteins are present (polyprotein), targets STAT2 for degradation. Interacts with serine protease NS3. Mn(2+) is required as a cofactor. Mg(2+) serves as cofactor. In terms of processing, specific enzymatic cleavages in vivo yield mature proteins. Cleavages in the lumen of endoplasmic reticulum are performed by host signal peptidase, whereas cleavages in the cytoplasmic side are performed by serine protease NS3. Signal cleavage at the 2K-4B site requires a prior NS3 protease-mediated cleavage at the 4A-2K site. Post-translationally, cleaved in post-Golgi vesicles by a host furin, releasing the mature small envelope protein M, and peptide pr. This cleavage is incomplete as up to 30% of viral particles still carry uncleaved prM. N-glycosylated. In terms of processing, N-glycosylated. The excreted form is glycosylated and this is required for efficient secretion of the protein from infected cells. Post-translationally, acetylated by host KAT5. Acetylation modulates NS3 RNA-binding and unwinding activities and plays an important positive role for viral replication. Phosphorylated on serines residues. This phosphorylation may trigger NS5 nuclear localization.

It is found in the host endoplasmic reticulum membrane. Its subcellular location is the virion. It localises to the host nucleus. The protein resides in the host cytoplasm. The protein localises to the host perinuclear region. It is found in the secreted. Its subcellular location is the virion membrane. It localises to the host cell surface. The enzyme catalyses Selective hydrolysis of -Xaa-Xaa-|-Yaa- bonds in which each of the Xaa can be either Arg or Lys and Yaa can be either Ser or Ala.. It carries out the reaction a ribonucleoside 5'-triphosphate + H2O = a ribonucleoside 5'-diphosphate + phosphate + H(+). It catalyses the reaction RNA(n) + a ribonucleoside 5'-triphosphate = RNA(n+1) + diphosphate. The catalysed reaction is ATP + H2O = ADP + phosphate + H(+). The enzyme catalyses a 5'-end (5'-triphosphoguanosine)-ribonucleoside in mRNA + S-adenosyl-L-methionine = a 5'-end (N(7)-methyl 5'-triphosphoguanosine)-ribonucleoside in mRNA + S-adenosyl-L-homocysteine. It carries out the reaction a 5'-end (N(7)-methyl 5'-triphosphoguanosine)-ribonucleoside in mRNA + S-adenosyl-L-methionine = a 5'-end (N(7)-methyl 5'-triphosphoguanosine)-(2'-O-methyl-ribonucleoside) in mRNA + S-adenosyl-L-homocysteine + H(+). Functionally, plays a role in virus budding by binding to the cell membrane and gathering the viral RNA into a nucleocapsid that forms the core of a mature virus particle. During virus entry, may induce genome penetration into the host cytoplasm after hemifusion induced by the surface proteins. Can migrate to the cell nucleus where it modulates host functions. Overcomes the anti-viral effects of host EXOC1 by sequestering and degrading the latter through the proteasome degradation pathway. In terms of biological role, inhibits RNA silencing by interfering with host Dicer. Prevents premature fusion activity of envelope proteins in trans-Golgi by binding to envelope protein E at pH6.0. After virion release in extracellular space, gets dissociated from E dimers. Its function is as follows. Acts as a chaperone for envelope protein E during intracellular virion assembly by masking and inactivating envelope protein E fusion peptide. prM is the only viral peptide matured by host furin in the trans-Golgi network probably to avoid catastrophic activation of the viral fusion activity in acidic Golgi compartment prior to virion release. prM-E cleavage is inefficient, and many virions are only partially matured. These uncleaved prM would play a role in immune evasion. Functionally, may play a role in virus budding. Exerts cytotoxic effects by activating a mitochondrial apoptotic pathway through M ectodomain. May display a viroporin activity. In terms of biological role, binds to host cell surface receptor and mediates fusion between viral and cellular membranes. Efficient virus attachment to cell is, at least in part, mediated by host HSPA5. Envelope protein is synthesized in the endoplasmic reticulum in the form of heterodimer with protein prM. They play a role in virion budding in the ER, and the newly formed immature particle is covered with 60 spikes composed of heterodimer between precursor prM and envelope protein E. The virion is transported to the Golgi apparatus where the low pH causes dissociation of PrM-E heterodimers and formation of E homodimers. prM-E cleavage is inefficient, and many virions are only partially matured. These uncleaved prM would play a role in immune evasion. Involved in immune evasion, pathogenesis and viral replication. Once cleaved off the polyprotein, is targeted to three destinations: the viral replication cycle, the plasma membrane and the extracellular compartment. Essential for viral replication. Required for formation of the replication complex and recruitment of other non-structural proteins to the ER-derived membrane structures. Excreted as a hexameric lipoparticle that plays a role against host immune response. Antagonizing the complement function. Binds to the host macrophages and dendritic cells. Inhibits signal transduction originating from Toll-like receptor 3 (TLR3). Its function is as follows. Component of the viral RNA replication complex that functions in virion assembly and antagonizes the host alpha/beta interferon antiviral response. Functionally, required cofactor for the serine protease function of NS3. May have membrane-destabilizing activity and form viroporins. In terms of biological role, displays three enzymatic activities: serine protease, NTPase and RNA helicase. NS3 serine protease, in association with NS2B, performs its autocleavage and cleaves the polyprotein at dibasic sites in the cytoplasm: C-prM, NS2A-NS2B, NS2B-NS3, NS3-NS4A, NS4A-2K and NS4B-NS5. NS3 RNA helicase binds RNA and unwinds dsRNA in the 3' to 5' direction. Regulates the ATPase activity of the NS3 helicase activity. NS4A allows NS3 helicase to conserve energy during unwinding. Its function is as follows. Functions as a signal peptide for NS4B and is required for the interferon antagonism activity of the latter. Functionally, induces the formation of ER-derived membrane vesicles where the viral replication takes place. Inhibits interferon (IFN)-induced host STAT1 phosphorylation and nuclear translocation, thereby preventing the establishment of cellular antiviral state by blocking the IFN-alpha/beta pathway. Inhibits STAT2 translocation in the nucleus after IFN-alpha treatment. In terms of biological role, replicates the viral (+) and (-) RNA genome. Performs the capping of genomes in the cytoplasm. NS5 methylates viral RNA cap at guanine N-7 and ribose 2'-O positions. Besides its role in RNA genome replication, also prevents the establishment of cellular antiviral state by blocking the interferon-alpha/beta (IFN-alpha/beta) signaling pathway. Inhibits host TYK2 and STAT2 phosphorylation, thereby preventing activation of JAK-STAT signaling pathway. The polypeptide is Genome polyprotein (Japanese encephalitis virus (strain M28) (JEV)).